Here is a 298-residue protein sequence, read N- to C-terminus: 4-nitrophenylphosphatase (298 aa).

Homodimer. In terms of processing, the N-terminus is blocked.

It catalyses the reaction 4-nitrophenyl phosphate + H2O = 4-nitrophenol + phosphate + H(+). With respect to regulation, activity enhanced by Mg(2+) ion but inhibited by Zn(2+) ion. The polypeptide is 4-nitrophenylphosphatase (pho2) (Schizosaccharomyces pombe (strain 972 / ATCC 24843) (Fission yeast)).